A 468-amino-acid chain; its full sequence is UDP-N-acetylmuramoyl-L-alanine--L-glutamate ligase (468 aa).

Residue 122-128 (GTKGKST) coordinates ATP.

Belongs to the MurCDEF family. MurD2 subfamily.

It is found in the cytoplasm. It carries out the reaction UDP-N-acetyl-alpha-D-muramoyl-L-alanine + L-glutamate + ATP = UDP-N-acetyl-alpha-D-muramoyl-L-alanyl-L-glutamate + ADP + phosphate + H(+). The protein operates within cell wall biogenesis; peptidoglycan biosynthesis. Its function is as follows. Cell wall formation. Catalyzes the addition of L-glutamate to the nucleotide precursor UDP-N-acetylmuramoyl-L-alanine. The polypeptide is UDP-N-acetylmuramoyl-L-alanine--L-glutamate ligase (Xanthomonas campestris pv. campestris (strain 8004)).